Consider the following 61-residue polypeptide: Metallothionein-2 (61 aa).

Methionine 1 carries the post-translational modification N-acetylmethionine. Positions 1–29 (MDPNCSCASDGSCSCAGACKCKQCKCTSC) are beta. Residues cysteine 5, cysteine 7, cysteine 13, cysteine 15, cysteine 19, cysteine 21, cysteine 24, cysteine 26, cysteine 29, cysteine 33, cysteine 34, cysteine 36, cysteine 37, cysteine 41, cysteine 44, cysteine 48, cysteine 50, and cysteine 57 each coordinate a divalent metal cation. The interval 30–61 (KKSCCSCCPVGCAKCSQGCICKEASDKCSCCA) is alpha. Serine 58 carries the post-translational modification Phosphoserine. The a divalent metal cation site is built by cysteine 59 and cysteine 60.

The protein belongs to the metallothionein superfamily. Type 1 family.

Its function is as follows. Metallothioneins have a high content of cysteine residues that bind various heavy metals; these proteins are transcriptionally regulated by both heavy metals and glucocorticoids. In Mus musculus (Mouse), this protein is Metallothionein-2 (Mt2).